Reading from the N-terminus, the 1482-residue chain is Cystic fibrosis transmembrane conductance regulator (1482 aa).

Topologically, residues 1-77 (MQRSPLEKAS…KLINALRRCF (77 aa)) are cytoplasmic. The chain crosses the membrane as a helical span at residues 78 to 98 (FWRFMFYGILLYLGEVTKAVQ). The ABC transmembrane type-1 1 domain maps to 81–365 (FMFYGILLYL…WAVQTWYDSL (285 aa)). Topologically, residues 99–122 (PLLLGRIIASYDPDNKVERSIAIY) are extracellular. Residues 123-146 (LGIGLCLLFIVRTLLLHPAIFGLH) form a helical membrane-spanning segment. Topologically, residues 147–195 (HIGMQMRIAMFSLIYKKILKLSSRVLDKISIGQLVSLLSNNLNKFDEGL) are cytoplasmic. Residues 196-216 (ALAHFVWIAPLQVTLLMGLLW) form a helical membrane-spanning segment. Residues 217 to 222 (ELLQAS) are Extracellular-facing. A helical membrane pass occupies residues 223–243 (AFCGLGFLIVLALVQAGLGRM). Over 244–298 (MMKYRDQRAGKINERLVITSEMIENIQSVKAYCWEEAMEKMIENLRQTELKLTRK) the chain is Cytoplasmic. A helical transmembrane segment spans residues 299–319 (AAYVRYFNSSAFFFSGFFVVF). At 320 to 339 (LSVLPYALIKGIILRKIFTT) the chain is on the extracellular side. Residues 340 to 358 (ISFCIVLRMAVTRQFPWAV) traverse the membrane as a helical segment. The Cytoplasmic segment spans residues 359 to 859 (QTWYDSLGAI…YLRYLAVNKS (501 aa)). ATP is bound by residues Trp401, 458-465 (GSTGAGKT), and Gln493. In terms of domain architecture, ABC transporter 1 spans 423–646 (NGDNSLFFSN…RPDFSSKLMG (224 aa)). Cys524 is lipidated: S-palmitoyl cysteine. Ser549 and Ser660 each carry phosphoserine. The disordered R region stretch occupies residues 654 to 832 (SAERRNSILT…EEINEEYLKE (179 aa)). Ser670 bears the Phosphoserine; by PKA mark. Residue Ser686 is modified to Phosphoserine. Lys688 is covalently cross-linked (Glycyl lysine isopeptide (Lys-Gly) (interchain with G-Cter in ubiquitin)). Residues Ser700 and Ser712 each carry the phosphoserine modification. Thr717 bears the Phosphothreonine mark. Phosphoserine is present on residues Ser738, Ser769, Ser791, Ser796, and Ser814. A helical transmembrane segment spans residues 860–880 (LSLVLIWCLVIFLAEVAISLA). The ABC transmembrane type-1 2 domain maps to 860-1156 (LSLVLIWCLV…AVNSSIDVDS (297 aa)). Over 881 to 919 (VLLLLDKSPRYSKGNGTASGNGSSAVIITSTSSYYLFYI) the chain is Extracellular. Asn895 and Asn901 each carry an N-linked (GlcNAc...) asparagine glycan. A discontinuously helical membrane pass occupies residues 920–940 (YVGVADTLLALGFFRGLPLVH). Over 941 to 991 (TLITVSKILHHRMLHSVLRAPMSTLNMLKAGGILNRFSKDIAILDDLLPLT) the chain is Cytoplasmic. A helical transmembrane segment spans residues 992-1012 (IFDFVQLLLIVIGAVAVVSVL). At 1013–1014 (QP) the chain is on the extracellular side. A helical membrane pass occupies residues 1015 to 1035 (YIFLATVPVIAAFVILRGYFL). Over 1036–1096 (HTSQQLKQLE…TANWFLYLST (61 aa)) the chain is Cytoplasmic. Residues 1097 to 1117 (LRWFQMRIEMIFVVFFIAVTF) form a helical membrane-spanning segment. Residues 1118 to 1131 (ISILTTGEGEGTVG) are Extracellular-facing. The chain crosses the membrane as a helical span at residues 1132 to 1152 (IILTLAMNIMGTLQWAVNSSI). Over 1153–1482 (DVDSLMRSVS…TEEEVQETRL (330 aa)) the chain is Cytoplasmic. Residues 1212–1445 (MTVKDLTARY…KSLFRQAISP (234 aa)) form the ABC transporter 2 domain. ATP-binding positions include Tyr1221 and 1246–1253 (GRTGAGKS). The tract at residues 1388–1482 (RTLKQAFADC…TEEEVQETRL (95 aa)) is interaction with GORASP2. Cys1397 is lipidated: S-palmitoyl cysteine. Phosphoserine is present on residues Ser1446 and Ser1458. The interval 1450-1482 (KLFPRRNSSKHKSRSPITALKEETEEEVQETRL) is disordered. A compositionally biased stretch (basic residues) spans 1451–1463 (LFPRRNSSKHKSR). A compositionally biased stretch (acidic residues) spans 1472–1482 (ETEEEVQETRL). The PDZ-binding signature appears at 1480–1482 (TRL).

The protein belongs to the ABC transporter superfamily. ABCC family. CFTR transporter (TC 3.A.1.202) subfamily. In terms of assembly, monomer; does not require oligomerization for channel activity. May form oligomers in the membrane. Interacts with SLC26A3, SLC26A6 and NHERF1. Interacts with SHANK2. Interacts with MYO6. Interacts (via C-terminus) with GOPC (via PDZ domain); this promotes CFTR internalization and thereby decreases channel activity. Interacts with SLC4A7 through NHERF1. Found in a complex with MYO5B and RAB11A. Interacts with ANO1. Interacts with SLC26A8. Interacts with AHCYL1; the interaction increases CFTR activity. Interacts with CSE1L. The core-glycosylated form interacts with GORASP2 (via PDZ GRASP-type 1 domain) in respone to ER stress. Interacts with MARCHF2; the interaction leads to CFTR ubiqtuitination and degradation. Interacts with ADGRG2. In terms of processing, N-glycosylated. Post-translationally, phosphorylated; cAMP treatment promotes phosphorylation and activates the channel. Dephosphorylation decreases the ATPase activity (in vitro). Phosphorylation at PKA sites activates the channel. Phosphorylation at PKC sites enhances the response to phosphorylation by PKA. Phosphorylated by AMPK; this inhibits channel activity. Ubiquitinated, leading to its degradation in the lysosome. Deubiquitination by USP10 in early endosomes enhances its endocytic recycling to the cell membrane. Ubiquitinated by RNF185 during ER stress. Ubiquitinated by MARCHF2.

It localises to the apical cell membrane. Its subcellular location is the early endosome membrane. The protein localises to the cell membrane. The protein resides in the recycling endosome membrane. It is found in the endoplasmic reticulum membrane. It localises to the nucleus. The catalysed reaction is ATP + H2O + closed Cl(-) channel = ADP + phosphate + open Cl(-) channel.. It catalyses the reaction chloride(in) = chloride(out). It carries out the reaction hydrogencarbonate(in) = hydrogencarbonate(out). The enzyme catalyses ATP + H2O = ADP + phosphate + H(+). Epithelial ion channel that plays an important role in the regulation of epithelial ion and water transport and fluid homeostasis. Mediates the transport of chloride ions across the cell membrane. Possesses an intrinsic ATPase activity and utilizes ATP to gate its channel; the passive flow of anions through the channel is gated by cycles of ATP binding and hydrolysis by the ATP-binding domains. The ion channel is also permeable to HCO(3)(-); selectivity depends on the extracellular chloride concentration. Exerts its function also by modulating the activity of other ion channels and transporters. Contributes to the regulation of the pH and the ion content of the epithelial fluid layer. Modulates the activity of the epithelial sodium channel (ENaC) complex, in part by regulating the cell surface expression of the ENaC complex. May regulate bicarbonate secretion and salvage in epithelial cells by regulating the transporter SLC4A7. Can inhibit the chloride channel activity of ANO1. Plays a role in the chloride and bicarbonate homeostasis during sperm epididymal maturation and capacitation. The protein is Cystic fibrosis transmembrane conductance regulator of Otolemur garnettii (Small-eared galago).